We begin with the raw amino-acid sequence, 419 residues long: UDP-N-acetylglucosamine 1-carboxyvinyltransferase (419 aa).

Residue 22–23 (KN) participates in phosphoenolpyruvate binding. Arg95 contributes to the UDP-N-acetyl-alpha-D-glucosamine binding site. Cys119 acts as the Proton donor in catalysis. Cys119 is subject to 2-(S-cysteinyl)pyruvic acid O-phosphothioketal. 2 residues coordinate UDP-N-acetyl-alpha-D-glucosamine: Asp308 and Ile330.

It belongs to the EPSP synthase family. MurA subfamily.

It is found in the cytoplasm. It catalyses the reaction phosphoenolpyruvate + UDP-N-acetyl-alpha-D-glucosamine = UDP-N-acetyl-3-O-(1-carboxyvinyl)-alpha-D-glucosamine + phosphate. It functions in the pathway cell wall biogenesis; peptidoglycan biosynthesis. In terms of biological role, cell wall formation. Adds enolpyruvyl to UDP-N-acetylglucosamine. This chain is UDP-N-acetylglucosamine 1-carboxyvinyltransferase, found in Rickettsia bellii (strain OSU 85-389).